We begin with the raw amino-acid sequence, 97 residues long: MAKTASPGATPPGNGTEPLPDNYEMALAELETLVARMEGGALSLEDSLTAYRRGATLVAFCQQQLEKVEQQVRVLDGATLKPLSSGTAATDGEDDDL.

Positions 1–22 are disordered; that stretch reads MAKTASPGATPPGNGTEPLPDN.

This sequence belongs to the XseB family. As to quaternary structure, heterooligomer composed of large and small subunits.

Its subcellular location is the cytoplasm. It catalyses the reaction Exonucleolytic cleavage in either 5'- to 3'- or 3'- to 5'-direction to yield nucleoside 5'-phosphates.. In terms of biological role, bidirectionally degrades single-stranded DNA into large acid-insoluble oligonucleotides, which are then degraded further into small acid-soluble oligonucleotides. This is Exodeoxyribonuclease 7 small subunit from Burkholderia lata (strain ATCC 17760 / DSM 23089 / LMG 22485 / NCIMB 9086 / R18194 / 383).